Reading from the N-terminus, the 232-residue chain is Ribonuclease 3 (232 aa).

The region spanning 6-135 (QDYLAKTYGI…FIGALYLDQG (130 aa)) is the RNase III domain. Glu48 contacts Mg(2+). Asp52 is a catalytic residue. Mg(2+) is bound by residues Asp121 and Glu124. Glu124 is an active-site residue. Positions 161-230 (DAKTSLQEFL…AKHALEKLRM (70 aa)) constitute a DRBM domain.

The protein belongs to the ribonuclease III family. In terms of assembly, homodimer. Mg(2+) serves as cofactor.

It is found in the cytoplasm. The catalysed reaction is Endonucleolytic cleavage to 5'-phosphomonoester.. Digests double-stranded RNA. Involved in the processing of primary rRNA transcript to yield the immediate precursors to the large and small rRNAs (23S and 16S). Processes some mRNAs, and tRNAs when they are encoded in the rRNA operon. Processes pre-crRNA and tracrRNA of type II CRISPR loci if present in the organism. In Limosilactobacillus fermentum (strain NBRC 3956 / LMG 18251) (Lactobacillus fermentum), this protein is Ribonuclease 3.